Here is a 155-residue protein sequence, read N- to C-terminus: Photosystem II extrinsic protein V (155 aa).

The N-terminal stretch at 1 to 20 (MFVKMIGWLVLFLFAHQTWA) is a signal peptide. Cysteine 50, cysteine 53, histidine 54, and histidine 105 together coordinate heme c.

The protein belongs to the cytochrome c family. PsbV subfamily. PSII is composed of 1 copy each of membrane proteins PsbA, PsbB, PsbC, PsbD, PsbE, PsbF, PsbH, PsbI, PsbJ, PsbK, PsbL, PsbM, PsbT, PsbY, PsbZ, Psb30/Ycf12, at least 3 peripheral proteins of the oxygen-evolving complex and a large number of cofactors. It forms dimeric complexes. The extrinsic subunits in red algae are PsbO (OEC33), PsbQ', cytochrome c-550 and PsbU. It depends on heme c as a cofactor.

The protein resides in the plastid. The protein localises to the chloroplast thylakoid membrane. One of the extrinsic, lumenal subunits of photosystem II (PSII). PSII is a light-driven water plastoquinone oxidoreductase, using light energy to abstract electrons from H(2)O, generating a proton gradient subsequently used for ATP formation. The extrinsic proteins stabilize the structure of photosystem II oxygen-evolving complex (OEC), the ion environment of oxygen evolution and protect the OEC against heat-induced inactivation. Unlike the T.vulcanus ortholog, it does not bind by itself to PSII, but requires all extrinsic members of the OEC. In Cyanidium caldarium (Red alga), this protein is Photosystem II extrinsic protein V.